The following is a 396-amino-acid chain: 1-deoxy-D-xylulose 5-phosphate reductoisomerase (396 aa).

NADPH contacts are provided by threonine 15, glycine 16, serine 17, isoleucine 18, glycine 41, and asparagine 130. Position 131 (lysine 131) interacts with 1-deoxy-D-xylulose 5-phosphate. Glutamate 132 is an NADPH binding site. Position 155 (aspartate 155) interacts with Mn(2+). 1-deoxy-D-xylulose 5-phosphate is bound by residues serine 156, glutamate 157, serine 181, and histidine 204. Glutamate 157 is a binding site for Mn(2+). An NADPH-binding site is contributed by glycine 210. 1-deoxy-D-xylulose 5-phosphate contacts are provided by serine 217, asparagine 222, lysine 223, and glutamate 226. Residue glutamate 226 participates in Mn(2+) binding.

It belongs to the DXR family. Mg(2+) is required as a cofactor. It depends on Mn(2+) as a cofactor.

It catalyses the reaction 2-C-methyl-D-erythritol 4-phosphate + NADP(+) = 1-deoxy-D-xylulose 5-phosphate + NADPH + H(+). Its pathway is isoprenoid biosynthesis; isopentenyl diphosphate biosynthesis via DXP pathway; isopentenyl diphosphate from 1-deoxy-D-xylulose 5-phosphate: step 1/6. Its function is as follows. Catalyzes the NADPH-dependent rearrangement and reduction of 1-deoxy-D-xylulose-5-phosphate (DXP) to 2-C-methyl-D-erythritol 4-phosphate (MEP). The chain is 1-deoxy-D-xylulose 5-phosphate reductoisomerase from Bifidobacterium longum (strain DJO10A).